A 450-amino-acid polypeptide reads, in one-letter code: Chromosomal replication initiator protein DnaA (450 aa).

The tract at residues methionine 1–isoleucine 76 is domain I, interacts with DnaA modulators. The domain II stretch occupies residues isoleucine 76 to lysine 107. The domain III, AAA+ region stretch occupies residues lysine 108–serine 327. Residues glycine 151, glycine 153, lysine 154, and threonine 155 each contribute to the ATP site. Residues glutamine 328–lysine 450 form a domain IV, binds dsDNA region.

This sequence belongs to the DnaA family. Oligomerizes as a right-handed, spiral filament on DNA at oriC.

It localises to the cytoplasm. The protein localises to the cell membrane. Its function is as follows. Plays an essential role in the initiation and regulation of chromosomal replication. ATP-DnaA binds to the origin of replication (oriC) to initiate formation of the DNA replication initiation complex once per cell cycle. Binds the DnaA box (a 9 base pair repeat at the origin) and separates the double-stranded (ds)DNA. Forms a right-handed helical filament on oriC DNA; dsDNA binds to the exterior of the filament while single-stranded (ss)DNA is stabiized in the filament's interior. The ATP-DnaA-oriC complex binds and stabilizes one strand of the AT-rich DNA unwinding element (DUE), permitting loading of DNA polymerase. After initiation quickly degrades to an ADP-DnaA complex that is not apt for DNA replication. Binds acidic phospholipids. In Mycoplasma capricolum subsp. capricolum (strain California kid / ATCC 27343 / NCTC 10154), this protein is Chromosomal replication initiator protein DnaA.